An 865-amino-acid chain; its full sequence is Xylosyltransferase 2 (865 aa).

The Cytoplasmic portion of the chain corresponds to 1 to 15 (MVASARVQKLVRRYK). A helical; Signal-anchor for type II membrane protein transmembrane segment spans residues 16-36 (LAIATALAILLLQGLVVWSFS). Residues 37–865 (GLEEDEAGEK…GPVKADGRLR (829 aa)) are Lumenal-facing. The interval 41-157 (DEAGEKGRQR…EGAPQPTDNG (117 aa)) is disordered. The span at 53–65 (RPLDPGEGSKDTD) shows a compositional bias: basic and acidic residues. Over residues 73-82 (STGRRHGRWR) the composition is skewed to basic residues. Asn122 carries an N-linked (GlcNAc...) asparagine glycan. Positions 125 to 137 (GAAAGEALVGAAG) are enriched in low complexity. 4 disulfide bridges follow: Cys162–Cys190, Cys206–Cys448, Cys467–Cys480, and Cys469–Cys478. UDP-alpha-D-xylose contacts are provided by residues Val239, Asp267, and 296–298 (TIW). N-linked (GlcNAc...) asparagine glycosylation occurs at Asn327. A UDP-alpha-D-xylose-binding site is contributed by 400–401 (DW). UDP-alpha-D-xylose-binding positions include Ser481 and 504 to 505 (RK). 2 cysteine pairs are disulfide-bonded: Cys581–Cys833 and Cys826–Cys839. Asn683 carries an N-linked (GlcNAc...) asparagine glycan. A disordered region spans residues 846–865 (SLSPDPKSELGPVKADGRLR).

It belongs to the glycosyltransferase 14 family. XylT subfamily. In terms of assembly, monomer. The cofactor is Mg(2+). It depends on Mn(2+) as a cofactor. In terms of processing, contains disulfide bonds. Widely expressed. Expressed at higher level in kidney and pancreas.

It is found in the golgi apparatus membrane. The protein localises to the secreted. The enzyme catalyses UDP-alpha-D-xylose + L-seryl-[protein] = 3-O-(beta-D-xylosyl)-L-seryl-[protein] + UDP + H(+). The protein operates within glycan metabolism; chondroitin sulfate biosynthesis. It functions in the pathway glycan metabolism; heparan sulfate biosynthesis. Its function is as follows. Catalyzes the first step in the biosynthesis of chondroitin sulfate, heparan sulfate and dermatan sulfate proteoglycans, such as DCN. Transfers D-xylose from UDP-D-xylose to specific serine residues of the core protein. This chain is Xylosyltransferase 2 (XYLT2), found in Homo sapiens (Human).